Here is a 156-residue protein sequence, read N- to C-terminus: MGRFIFVSLGLLVLAFSLSGIGADQHCPSGWFSHNVSCYKLINDWKTWDEAQRFCMDEQENGQLASINDVGESVKLSDEISKTWSIIDVWIGLRLSKRKSIWEWIDGSNVTQTRWEEGEPNNFLKKEFCVVLTSRSRYLKWNDKDCNRRHRFLCKF.

The first 23 residues, 1-23 (MGRFIFVSLGLLVLAFSLSGIGA), serve as a signal peptide directing secretion. 3 disulfides stabilise this stretch: cysteine 27–cysteine 38, cysteine 55–cysteine 154, and cysteine 129–cysteine 146. A C-type lectin domain is found at 34–155 (HNVSCYKLIN…CNRRHRFLCK (122 aa)). N-linked (GlcNAc...) asparagine glycans are attached at residues asparagine 35 and asparagine 109. A Mannose-binding motif is present at residues 119–121 (EPN). Positions 127, 142, and 143 each coordinate Ca(2+).

This sequence belongs to the true venom lectin family. Expressed by the venom gland.

Its subcellular location is the secreted. Its function is as follows. Mannose-binding lectin which recognizes specific carbohydrate structures and agglutinates a variety of animal cells by binding to cell-surface glycoproteins and glycolipids. May be a calcium-dependent lectin. This is C-type lectin lectoxin-Phi1 from Philodryas olfersii (Green snake).